We begin with the raw amino-acid sequence, 171 residues long: MELKSYVREIADFPKKGVSYKDITPLLLDPEAMRLAVKLFMKNLPHGKIDKVVGIESRGFFFATMLAEKLNAGFIPVRKPGKLPHRTHKENYDLEYGSDSLEIHEDAIKKGEKVLLHDDVLATGGTAAATCKLIEKCGGEIVQCNFLVELEFLKGVDKLKGYDVCSLIKYS.

Belongs to the purine/pyrimidine phosphoribosyltransferase family. Homodimer.

The protein resides in the cytoplasm. It carries out the reaction AMP + diphosphate = 5-phospho-alpha-D-ribose 1-diphosphate + adenine. Its pathway is purine metabolism; AMP biosynthesis via salvage pathway; AMP from adenine: step 1/1. In terms of biological role, catalyzes a salvage reaction resulting in the formation of AMP, that is energically less costly than de novo synthesis. In Christiangramia forsetii (strain DSM 17595 / CGMCC 1.15422 / KT0803) (Gramella forsetii), this protein is Adenine phosphoribosyltransferase.